A 302-amino-acid polypeptide reads, in one-letter code: Transcription factor bHLH7 (302 aa).

Positions 124–154 (QPMSQPAPPMPHQQSTIRPRVRARRGQATDP) are disordered. Residues 150 to 199 (QATDPHSIAERLRRERIAERIRSLQELVPTVNKTDRAAMIDEIVDYVKFL) enclose the bHLH domain.

As to quaternary structure, homodimer. As to expression, expressed constitutively in roots, leaves, stems and flowers.

Its subcellular location is the nucleus. In Arabidopsis thaliana (Mouse-ear cress), this protein is Transcription factor bHLH7 (BHLH7).